The chain runs to 1382 residues: MATGGRRGAAAAPLLVAVAALLLGAAGHLYPGEVCPGMDIRNNLTRLHELENCSVIEGHLQILLMFKTRPEDFRDLSFPKLIMITDYLLLFRVYGLESLKDLFPNLTVIRGSRLFFNYALVIFEMVHLKELGLYNLMNITRGSVRIEKNNELCYLATIDWSRILDSVEDNYIVLNKDDNEECGDICPGTAKGKTNCPATVINGQFVERCWTHSHCQKVCPTICKSHGCTAEGLCCHSECLGNCSQPDDPTKCVACRNFYLDGRCVETCPPPYYHFQDWRCVNFSFCQDLHHKCKNSRRQGCHQYVIHNNKCIPECPSGYTMNSSNLLCTPCLGPCPKVCHLLEGEKTIDSVTSAQELRGCTVINGSLIINIRGGNNLAAELEANLGLIEEISGYLKIRRSYALVSLSFFRKLRLIRGETLEIGNYSFYALDNQNLRQLWDWSKHNLTITQGKLFFHYNPKLCLSEIHKMEEVSGTKGRQERNDIALKTNGDQASCENELLKFSYIRTSFDKILLRWEPYWPPDFRDLLGFMLFYKEAPYQNVTEFDGQDACGSNSWTVVDIDPPLRSNDPKSQNHPGWLMRGLKPWTQYAIFVKTLVTFSDERRTYGAKSDIIYVQTDATNPSVPLDPISVSNSSSQIILKWKPPSDPNGNITHYLVFWERQAEDSELFELDYCLKGLKLPSRTWSPPFESEDSQKHNQSEYEDSAGECCSCPKTDSQILKELEESSFRKTFEDYLHNVVFVPRKTSSGTGAEDPRPSRKRRSLGDVGNVTVAVPTVAAFPNTSSTSVPTSPEEHRPFEKVVNKESLVISGLRHFTGYRIELQACNQDTPEERCSVAAYVSARTMPEAKADDIVGPVTHEIFENNVVHLMWQEPKEPNGLIVLYEVSYRRYGDEELHLCVSRKHFALERGCRLRGLSPGNYSVRIRATSLAGNGSWTEPTYFYVTDYLDVPSNIAKIIIGPLIFVFLFSVVIGSIYLFLRKRQPDGPLGPLYASSNPEYLSASDVFPCSVYVPDEWEVSREKITLLRELGQGSFGMVYEGNARDIIKGEAETRVAVKTVNESASLRERIEFLNEASVMKGFTCHHVVRLLGVVSKGQPTLVVMELMAHGDLKSYLRSLRPEAENNPGRPPPTLQEMIQMAAEIADGMAYLNAKKFVHRDLAARNCMVAHDFTVKIGDFGMTRDIYETDYYRKGGKGLLPVRWMAPESLKDGVFTTSSDMWSFGVVLWEITSLAEQPYQGLSNEQVLKFVMDGGYLDQPDNCPERVTDLMRMCWQFNPKMRPTFLEIVNLLKDDLHPSFPEVSFFHSEENKAPESEELEMEFEDMENVPLDRSSHCQREEAGGRDGGSSLGFKRSYEEHIPYTHMNGGKKNGRILTLPRSNPS.

An N-terminal signal peptide occupies residues 1–27; sequence MATGGRRGAAAAPLLVAVAALLLGAAG. Extracellular segments follow at residues 28–758 and 763–956; these read HLYP…PRPS and SLGD…NIAK. Cysteine 35 and cysteine 53 are disulfide-bonded. Asparagine 43, asparagine 52, asparagine 105, and asparagine 138 each carry an N-linked (GlcNAc...) asparagine glycan. Cystine bridges form between cysteine 153–cysteine 182, cysteine 186–cysteine 209, cysteine 196–cysteine 215, cysteine 219–cysteine 228, cysteine 223–cysteine 234, cysteine 235–cysteine 243, cysteine 239–cysteine 252, cysteine 255–cysteine 264, and cysteine 268–cysteine 280. Asparagine 242 carries an N-linked (GlcNAc...) asparagine glycan. The N-linked (GlcNAc...) asparagine glycan is linked to asparagine 282. Disulfide bonds link cysteine 286/cysteine 311, cysteine 293/cysteine 301, cysteine 315/cysteine 328, cysteine 331/cysteine 335, and cysteine 339/cysteine 360. Residue asparagine 322 is glycosylated (N-linked (GlcNAc...) asparagine). The N-linked (GlcNAc...) asparagine glycan is linked to asparagine 364. Serine 400 is modified (phosphoserine). At tyrosine 401 the chain carries Phosphotyrosine. Serine 407 carries the phosphoserine modification. N-linked (GlcNAc...) asparagine glycans are attached at residues asparagine 424 and asparagine 445. Cysteine 462 and cysteine 495 are joined by a disulfide. Asparagine 541, asparagine 633, asparagine 651, and asparagine 698 each carry an N-linked (GlcNAc...) asparagine glycan. Positions 624–726 constitute a Fibronectin type-III 1 domain; sequence VPLDPISVSN…SQILKELEES (103 aa). Cystine bridges form between cysteine 674-cysteine 899 and cysteine 825-cysteine 834. Residues 686–708 form a disordered region; it reads SPPFESEDSQKHNQSEYEDSAGE. The insulin-binding stretch occupies residues 733–741; sequence EDYLHNVVF. The tract at residues 746-766 is disordered; sequence TSSGTGAEDPRPSRKRRSLGD. Fibronectin type-III domains are found at residues 757–842 and 853–947; these read PSRK…YVSA and IVGP…VTDY. N-linked (GlcNAc...) asparagine glycans are attached at residues asparagine 769 and asparagine 782. N-linked (GlcNAc...) asparagine glycans are attached at residues asparagine 920 and asparagine 933. Residues 957-979 form a helical membrane-spanning segment; that stretch reads IIIGPLIFVFLFSVVIGSIYLFL. Over 980 to 1382 the chain is Cytoplasmic; the sequence is RKRQPDGPLG…ILTLPRSNPS (403 aa). 3 positions are modified to phosphotyrosine; by autocatalysis: tyrosine 992, tyrosine 999, and tyrosine 1011. Tyrosine 999 is a region of interest (important for interaction with IRS1, SHC1 and STAT5B). The Protein kinase domain occupies 1023-1298; the sequence is ITLLRELGQG…LLKDDLHPSF (276 aa). Serine 1033 and lysine 1057 together coordinate ATP. Residue lysine 1079 forms a Glycyl lysine isopeptide (Lys-Gly) (interchain with G-Cter in ubiquitin) linkage. Cysteine 1083 is modified (S-nitrosocysteine). 1104–1110 serves as a coordination point for ATP; the sequence is ELMAHGD. Aspartate 1159 acts as the Proton donor/acceptor in catalysis. ATP contacts are provided by residues 1163–1164 and aspartate 1177; that span reads RN. Phosphotyrosine; by autocatalysis occurs at positions 1185, 1189, 1190, 1355, and 1361. Positions 1360–1382 are disordered; the sequence is PYTHMNGGKKNGRILTLPRSNPS. The segment at 1361-1364 is PIK3R1-binding; sequence YTHM.

The protein belongs to the protein kinase superfamily. Tyr protein kinase family. Insulin receptor subfamily. Tetramer of 2 alpha and 2 beta chains linked by disulfide bonds. The alpha chains carry the insulin-binding regions, while the beta chains carry the kinase domain. Forms a hybrid receptor with IGF1R, the hybrid is a tetramer consisting of 1 alpha chain and 1 beta chain of INSR and 1 alpha chain and 1 beta chain of IGF1R. Interacts with SORBS1 but dissociates from it following insulin stimulation. Binds SH2B2. Activated form of INSR interacts (via Tyr-999) with the PTB/PID domains of IRS1 and SHC1. The sequences surrounding the phosphorylated NPXY motif contribute differentially to either IRS1 or SHC1 recognition. Interacts (via tyrosines in the C-terminus) with IRS2 (via PTB domain and 591-786 AA); the 591-786 would be the primary anchor of IRS2 to INSR while the PTB domain would have a stabilizing action on the interaction with INSR. Interacts with the SH2 domains of the 85 kDa regulatory subunit of PI3K (PIK3R1) in vitro, when autophosphorylated on tyrosine residues. Interacts with SOCS7. Interacts (via the phosphorylated Tyr-999), with SOCS3. Interacts (via the phosphorylated Tyr-1185, Tyr-1189, Tyr-1190) with SOCS1. Interacts with CAV2 (tyrosine-phosphorylated form); the interaction is increased with 'Tyr-27'phosphorylation of CAV2. Interacts with ARRB2. Interacts with GRB10; this interaction blocks the association between IRS1/IRS2 and INSR, significantly reduces insulin-stimulated tyrosine phosphorylation of IRS1 and IRS2 and thus decreases insulin signaling. Interacts with GRB7. Interacts with PDPK1. Interacts (via Tyr-1190) with GRB14 (via BPS domain); this interaction protects the tyrosines in the activation loop from dephosphorylation, but promotes dephosphorylation of Tyr-999, this results in decreased interaction with, and phosphorylation of, IRS1. Interacts (via subunit alpha) with ENPP1 (via 485-599 AA); this interaction blocks autophosphorylation. Interacts with PTPRE; this interaction is dependent of Tyr-1185, Tyr-1189 and Tyr-1190 of the INSR. Interacts with STAT5B (via SH2 domain). Interacts with PTPRF. Interacts with ATIC; ATIC together with PRKAA2/AMPK2 and HACD3/PTPLAD1 is proposed to be part of a signaling netwok regulating INSR autophosphorylation and endocytosis. Interacts with the cone snail venom insulin Con-Ins G1. Interacts with the insulin receptor SORL1; this interaction strongly increases its surface exposure, hence strengthens insulin signal reception. Interacts (tyrosine phosphorylated) with CCDC88A/GIV (via SH2-like region); binding requires autophosphorylation of the INSR C-terminal region. Interacts with GNAI3; the interaction is probably mediated by CCDC88A/GIV. Interacts with LMBRD1. Interacts (in response to insulin stimulation) with NCK1; this interaction may recruit PTPN1 to mediate INSR dephosphorylation. Interacts with CD248; this interaction diminishes INSR autophosphorylation. Post-translationally, after being transported from the endoplasmic reticulum to the Golgi apparatus, the single glycosylated precursor is further glycosylated and then cleaved, followed by its transport to the plasma membrane. Autophosphorylated on tyrosine residues in response to insulin. Phosphorylation of Tyr-999 is required for binding to IRS1, SHC1 and STAT5B. Dephosphorylated by PTPRE at Tyr-999, Tyr-1185, Tyr-1189 and Tyr-1190. May also be phosphorylated at Tyr-1185 and Tyr-1190 by mTORC2. Dephosphorylated by PTPRF and PTPN1. Dephosphorylated by PTPN2; down-regulates insulin-induced signaling. Dephosphorylation at Tyr-1189 and Tyr-1190 requires the SH2/SH3 adapter protein NCK1, probably to recruit its interaction partner PTPN1. In terms of processing, S-nitrosylation at Cys-1083 by BLVRB inhibits the receptor tyrosine kinase, thereby inhibiting insulin signaling. Post-translationally, ubiquitinated by MARCHF1; leading to degradation thereby reducing surface INSR expression. Isoform Long and isoform Short are predominantly expressed in tissue targets of insulin metabolic effects: liver, adipose tissue and skeletal muscle but are also expressed in the peripheral nerve, kidney, pulmonary alveoli, pancreatic acini, placenta vascular endothelium, fibroblasts, monocytes, granulocytes, erythrocytes and skin. Isoform Short is preferentially expressed in fetal cells such as fetal fibroblasts, muscle, liver and kidney. Found as a hybrid receptor with IGF1R in muscle, heart, kidney, adipose tissue, skeletal muscle, hepatoma, fibroblasts, spleen and placenta (at protein level). Overexpressed in several tumors, including breast, colon, lung, ovary, and thyroid carcinomas.

Its subcellular location is the cell membrane. The protein resides in the late endosome. It is found in the lysosome. It catalyses the reaction L-tyrosyl-[protein] + ATP = O-phospho-L-tyrosyl-[protein] + ADP + H(+). With respect to regulation, activated in response to insulin. Autophosphorylation activates the kinase activity. PTPN1, PTPRE and PTPRF dephosphorylate important tyrosine residues, thereby reducing INSR activity. Inhibited by ENPP1. GRB10 and GRB14 inhibit the catalytic activity of the INSR, they block access of substrates to the activated receptor. SOCS1 and SOCS3 act as negative regulators of INSR activity, they bind to the activated INRS and interfere with the phosphorylation of INSR substrates. Receptor tyrosine kinase which mediates the pleiotropic actions of insulin. Binding of insulin leads to phosphorylation of several intracellular substrates, including, insulin receptor substrates (IRS1, 2, 3, 4), SHC, GAB1, CBL and other signaling intermediates. Each of these phosphorylated proteins serve as docking proteins for other signaling proteins that contain Src-homology-2 domains (SH2 domain) that specifically recognize different phosphotyrosine residues, including the p85 regulatory subunit of PI3K and SHP2. Phosphorylation of IRSs proteins lead to the activation of two main signaling pathways: the PI3K-AKT/PKB pathway, which is responsible for most of the metabolic actions of insulin, and the Ras-MAPK pathway, which regulates expression of some genes and cooperates with the PI3K pathway to control cell growth and differentiation. Binding of the SH2 domains of PI3K to phosphotyrosines on IRS1 leads to the activation of PI3K and the generation of phosphatidylinositol-(3, 4, 5)-triphosphate (PIP3), a lipid second messenger, which activates several PIP3-dependent serine/threonine kinases, such as PDPK1 and subsequently AKT/PKB. The net effect of this pathway is to produce a translocation of the glucose transporter SLC2A4/GLUT4 from cytoplasmic vesicles to the cell membrane to facilitate glucose transport. Moreover, upon insulin stimulation, activated AKT/PKB is responsible for: anti-apoptotic effect of insulin by inducing phosphorylation of BAD; regulates the expression of gluconeogenic and lipogenic enzymes by controlling the activity of the winged helix or forkhead (FOX) class of transcription factors. Another pathway regulated by PI3K-AKT/PKB activation is mTORC1 signaling pathway which regulates cell growth and metabolism and integrates signals from insulin. AKT mediates insulin-stimulated protein synthesis by phosphorylating TSC2 thereby activating mTORC1 pathway. The Ras/RAF/MAP2K/MAPK pathway is mainly involved in mediating cell growth, survival and cellular differentiation of insulin. Phosphorylated IRS1 recruits GRB2/SOS complex, which triggers the activation of the Ras/RAF/MAP2K/MAPK pathway. In addition to binding insulin, the insulin receptor can bind insulin-like growth factors (IGFI and IGFII). Isoform Short has a higher affinity for IGFII binding. When present in a hybrid receptor with IGF1R, binds IGF1. PubMed:12138094 shows that hybrid receptors composed of IGF1R and INSR isoform Long are activated with a high affinity by IGF1, with low affinity by IGF2 and not significantly activated by insulin, and that hybrid receptors composed of IGF1R and INSR isoform Short are activated by IGF1, IGF2 and insulin. In contrast, PubMed:16831875 shows that hybrid receptors composed of IGF1R and INSR isoform Long and hybrid receptors composed of IGF1R and INSR isoform Short have similar binding characteristics, both bind IGF1 and have a low affinity for insulin. In adipocytes, inhibits lipolysis. In Homo sapiens (Human), this protein is Insulin receptor (INSR).